A 229-amino-acid polypeptide reads, in one-letter code: UPF0173 metal-dependent hydrolase SSP1060 (229 aa).

This sequence belongs to the UPF0173 family.

This is UPF0173 metal-dependent hydrolase SSP1060 from Staphylococcus saprophyticus subsp. saprophyticus (strain ATCC 15305 / DSM 20229 / NCIMB 8711 / NCTC 7292 / S-41).